We begin with the raw amino-acid sequence, 230 residues long: Potassium/proton antiporter CemA (230 aa).

4 helical membrane passes run 7–27 (LPSLLYLVFIVLLPWGVSSSF), 107–127 (ILHFSTNIICLAILSGSFFLG), 145–165 (LNDSIKAFFILLVTDFFVGFH), and 181–201 (FGWAPNELIFTIFVCSFPVIL).

It belongs to the CemA family.

The protein localises to the plastid. The protein resides in the chloroplast inner membrane. The enzyme catalyses K(+)(in) + H(+)(out) = K(+)(out) + H(+)(in). Its function is as follows. Contributes to K(+)/H(+) antiport activity by supporting proton efflux to control proton extrusion and homeostasis in chloroplasts in a light-dependent manner to modulate photosynthesis. Prevents excessive induction of non-photochemical quenching (NPQ) under continuous-light conditions. Indirectly promotes efficient inorganic carbon uptake into chloroplasts. In Triticum aestivum (Wheat), this protein is Potassium/proton antiporter CemA.